The chain runs to 232 residues: Charged multivesicular body protein 4c (232 aa).

Disordered stretches follow at residues 1-23 and 177-232; these read MSKLGKFFKGTRSSRARAAPSAQ and NKKM…AWAT. The interval 1–153 is intramolecular interaction with C-terminus; it reads MSKLGKFFKG…EISEAFSQRV (153 aa). 2 coiled-coil regions span residues 21 to 45 and 125 to 185; these read SAQEALARLRETEEMLAKKQEYLEN and LNKI…SLEL. The tract at residues 154–232 is intramolecular interaction with N-terminus; that stretch reads QFADGFDEAE…DFKQLAAWAT (79 aa). Serine 210 is modified (phosphoserine; by AURKB).

Belongs to the SNF7 family. In terms of assembly, probable core component of the endosomal sorting required for transport complex III (ESCRT-III). ESCRT-III components are thought to multimerize to form a flat lattice on the perimeter membrane of the endosome. Several assembly forms of ESCRT-III may exist that interact and act sequentially. Self-associates. Interacts with CHMP2A. Interacts with CHMP4A. Interacts with CHMP4B. Interacts with CHMP6. Interacts with VPS4A. Interacts with PDCD6IP; the interaction is direct. In terms of processing, phosphorylated at Ser-210 by AURKB during cytokinesis: together with ZFYVE19/ANCHR, phosphorylated CHMP4C retains abscission-competent VPS4 (VPS4A and/or VPS4B) at the midbody ring until abscission checkpoint signaling is terminated at late cytokinesis.

It is found in the cytoplasm. The protein localises to the cytosol. It localises to the late endosome membrane. The protein resides in the midbody. Its subcellular location is the midbody ring. Functionally, probable core component of the endosomal sorting required for transport complex III (ESCRT-III) which is involved in multivesicular bodies (MVBs) formation and sorting of endosomal cargo proteins into MVBs. MVBs contain intraluminal vesicles (ILVs) that are generated by invagination and scission from the limiting membrane of the endosome and mostly are delivered to lysosomes enabling degradation of membrane proteins, such as stimulated growth factor receptors, lysosomal enzymes and lipids. The MVB pathway appears to require the sequential function of ESCRT-O, -I,-II and -III complexes. ESCRT-III proteins mostly dissociate from the invaginating membrane before the ILV is released. The ESCRT machinery also functions in topologically equivalent membrane fission events, such as the terminal stages of cytokinesis. Key component of the cytokinesis checkpoint, a process required to delay abscission to prevent both premature resolution of intercellular chromosome bridges and accumulation of DNA damage: upon phosphorylation by AURKB, together with ZFYVE19/ANCHR, retains abscission-competent VPS4 (VPS4A and/or VPS4B) at the midbody ring until abscission checkpoint signaling is terminated at late cytokinesis. Deactivation of AURKB results in dephosphorylation of CHMP4C followed by its dissociation from ANCHR and VPS4 and subsequent abscission. ESCRT-III proteins are believed to mediate the necessary vesicle extrusion and/or membrane fission activities, possibly in conjunction with the AAA ATPase VPS4. CHMP4A/B/C are required for the exosomal release of SDCBP, CD63 and syndecan. In Mus musculus (Mouse), this protein is Charged multivesicular body protein 4c (Chmp4c).